Here is a 271-residue protein sequence, read N- to C-terminus: Protein CDV3 homolog (271 aa).

Basic and acidic residues predominate over residues 37 to 47 (KREVVKPKKPE). 2 disordered regions span residues 37–151 (KREV…GHGP) and 186–271 (SQQA…DEAS). The span at 48–61 (VAAGGVAVVGENEN) shows a compositional bias: low complexity. Residues 73 to 82 (VEEEWKEFEE) show a composition bias toward acidic residues. Residues 95 to 114 (QLSTISSARSRTAQESSESQ) show a composition bias toward polar residues. The residue at position 134 (Ser-134) is a Phosphoserine. The span at 224–242 (RPEEQRKKKNEPAFEEVRH) shows a compositional bias: basic and acidic residues.

This sequence belongs to the CDV3 family.

The chain is Protein CDV3 homolog from Drosophila melanogaster (Fruit fly).